We begin with the raw amino-acid sequence, 65 residues long: DNA-directed RNA polymerase subunit Rpo10 (65 aa).

Residues cysteine 7, cysteine 10, cysteine 44, and cysteine 45 each contribute to the Zn(2+) site.

Belongs to the archaeal Rpo10/eukaryotic RPB10 RNA polymerase subunit family. As to quaternary structure, part of the RNA polymerase complex. The cofactor is Zn(2+).

It is found in the cytoplasm. It carries out the reaction RNA(n) + a ribonucleoside 5'-triphosphate = RNA(n+1) + diphosphate. Its function is as follows. DNA-dependent RNA polymerase (RNAP) catalyzes the transcription of DNA into RNA using the four ribonucleoside triphosphates as substrates. The chain is DNA-directed RNA polymerase subunit Rpo10 from Nanoarchaeum equitans (strain Kin4-M).